The primary structure comprises 1958 residues: Rho GTPase-activating protein 21 (1958 aa).

Residues 1 to 42 (MMATRRTGLSEGDGDKLKACEVSKNKDGKEQSETVSLSEDET) are disordered. Positions 13 to 32 (DGDKLKACEVSKNKDGKEQS) are enriched in basic and acidic residues. Phosphoserine occurs at positions 36 and 57. The PDZ domain maps to 50–159 (TVTLKRTSQG…TLELSVMPKD (110 aa)). Composition is skewed to polar residues over residues 286–295 (SNRNNHTGPS), 306–325 (SEQT…LSIP), and 418–436 (ASQS…TTLQ). Disordered stretches follow at residues 286-325 (SNRN…LSIP) and 418-458 (ASQS…QRSV). Over residues 448-458 (PQSVQIRQRSV) the composition is skewed to low complexity. S459 is subject to Phosphoserine. 2 positions are modified to omega-N-methylarginine: R554 and R575. A phosphoserine mark is found at S612, S616, and S625. Over residues 659 to 687 (SLLNQQTWVRTDSAPDQQVETGKSPSLSG) the composition is skewed to polar residues. The interval 659–751 (SLLNQQTWVR…PSGRQTPQPL (93 aa)) is disordered. Residue S717 is modified to Phosphoserine. Residues 729 to 742 (LDNKEAVILREKPP) are compositionally biased toward basic and acidic residues. T747 bears the Phosphothreonine mark. Phosphoserine occurs at positions 857, 862, and 881. Residues 859 to 885 (DHESVGPPSLDAQPNSKTERSKSYDEG) are disordered. Positions 875 to 885 (KTERSKSYDEG) are enriched in basic and acidic residues. Y882 bears the Phosphotyrosine mark. Phosphoserine occurs at positions 924, 926, 954, 1099, and 1115. The interaction with ARF1 and ARF6 stretch occupies residues 930-1097 (SDAAKEGWLH…AKSEPKTQSP (168 aa)). The PH domain maps to 931-1040 (DAAKEGWLHF…WIKTIQESSN (110 aa)). The disordered stretch occupies residues 1086–1133 (LGAKSEPKTQSPHSPKEESERKLLSKDDTSPPKDKGTWRKGIPSIMRK). The segment covering 1099 to 1122 (SPKEESERKLLSKDDTSPPKDKGT) has biased composition (basic and acidic residues). The region spanning 1147–1339 (VRLDDCPPAH…TLIQHHDWFF (193 aa)) is the Rho-GAP domain. 4 disordered regions span residues 1348-1401 (LTTV…GSGK), 1418-1575 (SRKR…KHSE), 1598-1642 (SLDS…SEFP), and 1655-1686 (RGKL…SSLD). Residues 1349-1362 (TTVQEESTVDSQPV) show a composition bias toward polar residues. Residues 1383–1401 (SDSATSDSTKSKGSWGSGK) are compositionally biased toward low complexity. S1418, S1432, and S1433 each carry phosphoserine. 2 stretches are compositionally biased toward basic and acidic residues: residues 1441–1466 (FFKK…ETLG) and 1477–1493 (NSTR…KISL). K1444 is covalently cross-linked (Glycyl lysine isopeptide (Lys-Gly) (interchain with G-Cter in SUMO)). S1504 is modified (phosphoserine). T1516 is subject to Phosphothreonine. Residue S1527 is modified to Phosphoserine. Low complexity predominate over residues 1544–1559 (SDSGTLLSTSSQASLA). The segment at 1592–1861 (SATYLTSLDS…WLARERLRTS (270 aa)) is interaction with CTNNA1. Residues 1603–1612 (RLSPEVQSVA) are compositionally biased toward polar residues. Over residues 1624 to 1634 (SELISEGRPVE) the composition is skewed to basic and acidic residues. S1669 carries the post-translational modification Phosphoserine. Residues 1671–1686 (GSELSCTEGSLTSSLD) show a composition bias toward polar residues. Phosphothreonine is present on T1682. Phosphoserine is present on S1742. A disordered region spans residues 1860 to 1958 (TSTSDLSRGE…GSKAEFHPCL (99 aa)). Residues 1874-1909 (QTENPSTREIATTDTPLSLHCNTGSSSSTLASTNRP) are compositionally biased toward polar residues. S1917 carries the phosphoserine modification. Polar residues predominate over residues 1918 to 1931 (PDQINGESFQNVSK).

As to quaternary structure, interacts with GTP-bound ARF1 and ARF6. Interacts with CTNNA1. Post-translationally, sumoylated with SUMO2 and SUMO3 in proliferating lymphocytes. In terms of tissue distribution, widely expressed with higher expression in brain, heart, skeletal muscle and placenta.

The protein localises to the golgi apparatus membrane. The protein resides in the cell junction. It localises to the cytoplasmic vesicle membrane. It is found in the cytoplasm. Its subcellular location is the cytoskeleton. Functionally, functions as a GTPase-activating protein (GAP) for RHOA and CDC42. Downstream partner of ARF1 which may control Golgi apparatus structure and function. Also required for CTNNA1 recruitment to adherens junctions. In Homo sapiens (Human), this protein is Rho GTPase-activating protein 21 (ARHGAP21).